A 359-amino-acid chain; its full sequence is Endoglucanase (359 aa).

Residues M1–A23 form the signal peptide. The active-site Proton donor is the E53. The active-site Nucleophile is D110.

The protein belongs to the glycosyl hydrolase 8 (cellulase D) family.

It carries out the reaction Endohydrolysis of (1-&gt;4)-beta-D-glucosidic linkages in cellulose, lichenin and cereal beta-D-glucans.. Functionally, the biological conversion of cellulose to glucose generally requires three types of hydrolytic enzymes: (1) Endoglucanases which cut internal beta-1,4-glucosidic bonds; (2) Exocellobiohydrolases that cut the disaccharide cellobiose from the non-reducing end of the cellulose polymer chain; (3) Beta-1,4-glucosidases which hydrolyze the cellobiose and other short cello-oligosaccharides to glucose. The polypeptide is Endoglucanase (Cellulomonas uda).